The following is a 628-amino-acid chain: Glutamyl-tRNA(Gln) amidotransferase subunit E (628 aa).

This sequence belongs to the GatB/GatE family. GatE subfamily. Heterodimer of GatD and GatE.

The catalysed reaction is L-glutamyl-tRNA(Gln) + L-glutamine + ATP + H2O = L-glutaminyl-tRNA(Gln) + L-glutamate + ADP + phosphate + H(+). In terms of biological role, allows the formation of correctly charged Gln-tRNA(Gln) through the transamidation of misacylated Glu-tRNA(Gln) in organisms which lack glutaminyl-tRNA synthetase. The reaction takes place in the presence of glutamine and ATP through an activated gamma-phospho-Glu-tRNA(Gln). The GatDE system is specific for glutamate and does not act on aspartate. This chain is Glutamyl-tRNA(Gln) amidotransferase subunit E, found in Pyrococcus furiosus (strain ATCC 43587 / DSM 3638 / JCM 8422 / Vc1).